The sequence spans 356 residues: Outer membrane protein Omp38 (356 aa).

Positions 1-19 (MKLSRIALATMLVAAPLAA) are cleaved as a signal peptide. The 119-residue stretch at 221-339 (ELTEDLNMEL…RVFATITGSR (119 aa)) folds into the OmpA-like domain. Meso-2,6-diaminopimelate-binding residues include Asn237, Asp271, Thr273, Asn279, and Arg286.

This sequence belongs to the outer membrane OOP (TC 1.B.6) superfamily. In terms of assembly, homotrimer. Forms a pore with a size of 1.3 nm.

It localises to the cell outer membrane. Its subcellular location is the host mitochondrion. Functionally, functions as a porin. Induces apoptosis in human cell lines through caspase-dependent and AIF-dependent pathways. Purified Omp38 enters host cell and localizes to the mitochondria, which presumably leads to a release of proapoptotic molecules such as cytochrome c and AIF (apoptosis-inducing factor). Binds peptidoglycan, contributes to cell wall maintenance. The protein is Outer membrane protein Omp38 of Acinetobacter baumannii (strain ATCC 19606 / DSM 30007 / JCM 6841 / CCUG 19606 / CIP 70.34 / NBRC 109757 / NCIMB 12457 / NCTC 12156 / 81).